A 155-amino-acid polypeptide reads, in one-letter code: Small ribosomal subunit protein uS9 (155 aa).

The protein belongs to the universal ribosomal protein uS9 family.

The protein is Small ribosomal subunit protein uS9 of Allorhizobium ampelinum (strain ATCC BAA-846 / DSM 112012 / S4) (Agrobacterium vitis (strain S4)).